The chain runs to 421 residues: Probable dual-specificity RNA methyltransferase RlmN (421 aa).

The segment at 1–23 (MTATTAESGRPDQPPTAEAGRPV) is disordered. Catalysis depends on Glu-127, which acts as the Proton acceptor. The region spanning 133–372 (YPDRATVCVS…VTTVRDTRGR (240 aa)) is the Radical SAM core domain. Residues Cys-140 and Cys-378 are joined by a disulfide bond. 3 residues coordinate [4Fe-4S] cluster: Cys-147, Cys-151, and Cys-154. Residues 202 to 203 (GE), Ser-236, 259 to 261 (SLH), and Asn-335 each bind S-adenosyl-L-methionine. Cys-378 functions as the S-methylcysteine intermediate in the catalytic mechanism. Residues 383 to 421 (AEPAGKPERTDRPEQVGSDRLVEFGAVGSTTPDGDRVLR) are disordered. Basic and acidic residues predominate over residues 387-396 (GKPERTDRPE).

It belongs to the radical SAM superfamily. RlmN family. It depends on [4Fe-4S] cluster as a cofactor.

It localises to the cytoplasm. It carries out the reaction adenosine(2503) in 23S rRNA + 2 reduced [2Fe-2S]-[ferredoxin] + 2 S-adenosyl-L-methionine = 2-methyladenosine(2503) in 23S rRNA + 5'-deoxyadenosine + L-methionine + 2 oxidized [2Fe-2S]-[ferredoxin] + S-adenosyl-L-homocysteine. The enzyme catalyses adenosine(37) in tRNA + 2 reduced [2Fe-2S]-[ferredoxin] + 2 S-adenosyl-L-methionine = 2-methyladenosine(37) in tRNA + 5'-deoxyadenosine + L-methionine + 2 oxidized [2Fe-2S]-[ferredoxin] + S-adenosyl-L-homocysteine. Functionally, specifically methylates position 2 of adenine 2503 in 23S rRNA and position 2 of adenine 37 in tRNAs. The polypeptide is Probable dual-specificity RNA methyltransferase RlmN (Frankia casuarinae (strain DSM 45818 / CECT 9043 / HFP020203 / CcI3)).